The sequence spans 356 residues: Butyrate kinase (356 aa).

This sequence belongs to the acetokinase family.

The protein localises to the cytoplasm. It carries out the reaction butanoate + ATP = butanoyl phosphate + ADP. The protein operates within lipid metabolism; butanoate metabolism. In terms of biological role, catalyzes the conversion of butyryl-CoA through butyryl phosphate to butyrate. This Clostridium perfringens (strain ATCC 13124 / DSM 756 / JCM 1290 / NCIMB 6125 / NCTC 8237 / Type A) protein is Butyrate kinase (buk).